Reading from the N-terminus, the 503-residue chain is 2-isopropylmalate synthase (503 aa).

The Mn(2+) site is built by aspartate 1, histidine 189, histidine 191, and asparagine 225. The 254-residue stretch at 1–254 (DGEQALQASL…STNINHKEIY (254 aa)) folds into the Pyruvate carboxyltransferase domain. Residues 379-503 (SLKFFSVQSI…NKNLKNLKKQ (125 aa)) are regulatory domain.

Belongs to the alpha-IPM synthase/homocitrate synthase family. LeuA type 1 subfamily. Homodimer. It depends on Mn(2+) as a cofactor.

It is found in the cytoplasm. It carries out the reaction 3-methyl-2-oxobutanoate + acetyl-CoA + H2O = (2S)-2-isopropylmalate + CoA + H(+). Its pathway is amino-acid biosynthesis; L-leucine biosynthesis; L-leucine from 3-methyl-2-oxobutanoate: step 1/4. Catalyzes the condensation of the acetyl group of acetyl-CoA with 3-methyl-2-oxobutanoate (2-ketoisovalerate) to form 3-carboxy-3-hydroxy-4-methylpentanoate (2-isopropylmalate). This is 2-isopropylmalate synthase from Buchnera aphidicola subsp. Uroleucon ambrosiae.